The chain runs to 485 residues: tRNA sulfurtransferase (485 aa).

The THUMP domain maps to 63–167; the sequence is DKLVERLSCM…NELLYLVTAI (105 aa). Residues 185–186, lysine 267, glycine 289, and glutamine 298 contribute to the ATP site; that span reads LI. A disulfide bridge links cysteine 346 with cysteine 458. Residues 406–485 enclose the Rhodanese domain; sequence LAENEVILDI…FNNIKVYRQN (80 aa). Cysteine 458 (cysteine persulfide intermediate) is an active-site residue.

It belongs to the ThiI family.

It is found in the cytoplasm. It catalyses the reaction [ThiI sulfur-carrier protein]-S-sulfanyl-L-cysteine + a uridine in tRNA + 2 reduced [2Fe-2S]-[ferredoxin] + ATP + H(+) = [ThiI sulfur-carrier protein]-L-cysteine + a 4-thiouridine in tRNA + 2 oxidized [2Fe-2S]-[ferredoxin] + AMP + diphosphate. The catalysed reaction is [ThiS sulfur-carrier protein]-C-terminal Gly-Gly-AMP + S-sulfanyl-L-cysteinyl-[cysteine desulfurase] + AH2 = [ThiS sulfur-carrier protein]-C-terminal-Gly-aminoethanethioate + L-cysteinyl-[cysteine desulfurase] + A + AMP + 2 H(+). The protein operates within cofactor biosynthesis; thiamine diphosphate biosynthesis. Catalyzes the ATP-dependent transfer of a sulfur to tRNA to produce 4-thiouridine in position 8 of tRNAs, which functions as a near-UV photosensor. Also catalyzes the transfer of sulfur to the sulfur carrier protein ThiS, forming ThiS-thiocarboxylate. This is a step in the synthesis of thiazole, in the thiamine biosynthesis pathway. The sulfur is donated as persulfide by IscS. In Tolumonas auensis (strain DSM 9187 / NBRC 110442 / TA 4), this protein is tRNA sulfurtransferase.